A 416-amino-acid polypeptide reads, in one-letter code: Glutamyl-tRNA reductase (416 aa).

Substrate is bound by residues 50–53, serine 109, 114–116, and glutamine 120; these read TCNR and EPQ. Residue cysteine 51 is the Nucleophile of the active site. 189–194 contributes to the NADP(+) binding site; that stretch reads GAGEMI.

It belongs to the glutamyl-tRNA reductase family. Homodimer.

The catalysed reaction is (S)-4-amino-5-oxopentanoate + tRNA(Glu) + NADP(+) = L-glutamyl-tRNA(Glu) + NADPH + H(+). Its pathway is porphyrin-containing compound metabolism; protoporphyrin-IX biosynthesis; 5-aminolevulinate from L-glutamyl-tRNA(Glu): step 1/2. Its function is as follows. Catalyzes the NADPH-dependent reduction of glutamyl-tRNA(Glu) to glutamate 1-semialdehyde (GSA). This chain is Glutamyl-tRNA reductase, found in Ruthia magnifica subsp. Calyptogena magnifica.